A 283-amino-acid chain; its full sequence is ATP phosphoribosyltransferase (283 aa).

It belongs to the ATP phosphoribosyltransferase family. Long subfamily. Requires Mg(2+) as cofactor.

The protein localises to the cytoplasm. It catalyses the reaction 1-(5-phospho-beta-D-ribosyl)-ATP + diphosphate = 5-phospho-alpha-D-ribose 1-diphosphate + ATP. The protein operates within amino-acid biosynthesis; L-histidine biosynthesis; L-histidine from 5-phospho-alpha-D-ribose 1-diphosphate: step 1/9. With respect to regulation, feedback inhibited by histidine. Its function is as follows. Catalyzes the condensation of ATP and 5-phosphoribose 1-diphosphate to form N'-(5'-phosphoribosyl)-ATP (PR-ATP). Has a crucial role in the pathway because the rate of histidine biosynthesis seems to be controlled primarily by regulation of HisG enzymatic activity. This chain is ATP phosphoribosyltransferase, found in Rhodococcus erythropolis (strain PR4 / NBRC 100887).